The following is a 220-amino-acid chain: Fructose-6-phosphate aldolase (220 aa).

The active-site Schiff-base intermediate with substrate is the K85.

It belongs to the transaldolase family. Type 3A subfamily. Homodecamer.

Its subcellular location is the cytoplasm. It carries out the reaction beta-D-fructose 6-phosphate = dihydroxyacetone + D-glyceraldehyde 3-phosphate. Catalyzes the reversible formation of fructose 6-phosphate from dihydroxyacetone and D-glyceraldehyde 3-phosphate via an aldolization reaction. This is Fructose-6-phosphate aldolase from Salmonella arizonae (strain ATCC BAA-731 / CDC346-86 / RSK2980).